We begin with the raw amino-acid sequence, 458 residues long: Elongation factor 1-alpha (458 aa).

Gly2 carries the n,N,N-trimethylglycine modification. Residue Lys3 is modified to N6,N6-dimethyllysine; alternate. The residue at position 3 (Lys3) is an N6-methyllysine; alternate. The tr-type G domain maps to 5-240; sequence KTHVNVVVIG…DAIEPPVRPT (236 aa). A G1 region spans residues 14–21; sequence GHVDSGKS. Position 14–21 (14–21) interacts with GTP; that stretch reads GHVDSGKS. Lys30 carries the N6-methyllysine modification. Residues 70–74 are G2; sequence GITID. N6,N6,N6-trimethyllysine is present on Lys79. Residues 91–94 form a G3 region; it reads DAPG. GTP-binding positions include 91 to 95 and 153 to 156; these read DAPGH and NKMD. A G4 region spans residues 153-156; that stretch reads NKMD. A G5 region spans residues 192-194; it reads SGW. The residue at position 316 (Lys316) is an N6,N6-dimethyllysine; alternate. Lys316 carries the post-translational modification N6-methyllysine; alternate. An N6-methyllysine modification is found at Lys390.

Belongs to the TRAFAC class translation factor GTPase superfamily. Classic translation factor GTPase family. EF-Tu/EF-1A subfamily.

It is found in the cytoplasm. Its function is as follows. This protein promotes the GTP-dependent binding of aminoacyl-tRNA to the A-site of ribosomes during protein biosynthesis. In Eremothecium gossypii (strain ATCC 10895 / CBS 109.51 / FGSC 9923 / NRRL Y-1056) (Yeast), this protein is Elongation factor 1-alpha (TEF).